A 299-amino-acid chain; its full sequence is Phosphate import ATP-binding protein PstB 1 (299 aa).

The interval 1 to 51 (MTENEMTSNDSTEPTPTTETAASSPDPSGDPLIEQSIDVEGTDSTAAETGK) is disordered. Positions 10-27 (DSTEPTPTTETAASSPDP) are enriched in low complexity. Residues 54-294 (IESSDLNVFY…PESQRVEDYI (241 aa)) form the ABC transporter domain. An ATP-binding site is contributed by 86-93 (GPSGCGKS).

This sequence belongs to the ABC transporter superfamily. Phosphate importer (TC 3.A.1.7) family. The complex is composed of two ATP-binding proteins (PstB), two transmembrane proteins (PstC and PstA) and a solute-binding protein (PstS).

It localises to the cell membrane. It carries out the reaction phosphate(out) + ATP + H2O = ADP + 2 phosphate(in) + H(+). In terms of biological role, part of the ABC transporter complex PstSACB involved in phosphate import. Responsible for energy coupling to the transport system. In Haloarcula marismortui (strain ATCC 43049 / DSM 3752 / JCM 8966 / VKM B-1809) (Halobacterium marismortui), this protein is Phosphate import ATP-binding protein PstB 1.